The following is a 436-amino-acid chain: Trigger factor (436 aa).

In terms of domain architecture, PPIase FKBP-type spans 163 to 248; sequence GDRVTVDFEG…VKKIEAAHLP (86 aa).

Belongs to the FKBP-type PPIase family. Tig subfamily.

The protein localises to the cytoplasm. It catalyses the reaction [protein]-peptidylproline (omega=180) = [protein]-peptidylproline (omega=0). Involved in protein export. Acts as a chaperone by maintaining the newly synthesized protein in an open conformation. Functions as a peptidyl-prolyl cis-trans isomerase. The protein is Trigger factor of Acidovorax ebreus (strain TPSY) (Diaphorobacter sp. (strain TPSY)).